Reading from the N-terminus, the 379-residue chain is Chaperone protein DnaJ (379 aa).

In terms of domain architecture, J spans Asp-5–Gly-70. The CR-type zinc finger occupies Gly-139–Gln-217. Zn(2+) is bound by residues Cys-152, Cys-155, Cys-169, Cys-172, Cys-191, Cys-194, Cys-205, and Cys-208. CXXCXGXG motif repeat units follow at residues Cys-152–Gly-159, Cys-169–Gly-176, Cys-191–Gly-198, and Cys-205–Gly-212.

The protein belongs to the DnaJ family. As to quaternary structure, homodimer. The cofactor is Zn(2+).

Its subcellular location is the cytoplasm. Participates actively in the response to hyperosmotic and heat shock by preventing the aggregation of stress-denatured proteins and by disaggregating proteins, also in an autonomous, DnaK-independent fashion. Unfolded proteins bind initially to DnaJ; upon interaction with the DnaJ-bound protein, DnaK hydrolyzes its bound ATP, resulting in the formation of a stable complex. GrpE releases ADP from DnaK; ATP binding to DnaK triggers the release of the substrate protein, thus completing the reaction cycle. Several rounds of ATP-dependent interactions between DnaJ, DnaK and GrpE are required for fully efficient folding. Also involved, together with DnaK and GrpE, in the DNA replication of plasmids through activation of initiation proteins. The polypeptide is Chaperone protein DnaJ (Cupriavidus metallidurans (strain ATCC 43123 / DSM 2839 / NBRC 102507 / CH34) (Ralstonia metallidurans)).